Here is a 129-residue protein sequence, read N- to C-terminus: Large ribosomal subunit protein bL20 (129 aa).

It belongs to the bacterial ribosomal protein bL20 family.

Its function is as follows. Binds directly to 23S ribosomal RNA and is necessary for the in vitro assembly process of the 50S ribosomal subunit. It is not involved in the protein synthesizing functions of that subunit. The sequence is that of Large ribosomal subunit protein bL20 from Mycolicibacterium smegmatis (strain ATCC 700084 / mc(2)155) (Mycobacterium smegmatis).